Here is a 313-residue protein sequence, read N- to C-terminus: Olfactory receptor 1J2 (313 aa).

Residues 1–25 are Extracellular-facing; the sequence is MSPENQSSVSEFLLLGLPIRPEQQA. An N-linked (GlcNAc...) asparagine glycan is attached at Asn-5. A helical membrane pass occupies residues 26–49; sequence VFFTLFLGMYLTTVLGNLLIMLLI. Topologically, residues 50-57 are cytoplasmic; sequence QLDSHLHT. Residues 58–79 form a helical membrane-spanning segment; it reads PMYFFLSHLALTDISFSSVTVP. Residues 80–100 lie on the Extracellular side of the membrane; that stretch reads KMLMDMRTKYKSILYEECISQ. Residues Cys-97 and Cys-189 are joined by a disulfide bond. The chain crosses the membrane as a helical span at residues 101-120; it reads MYFFIFFTDLDSFLITSMAY. The Cytoplasmic segment spans residues 121–139; that stretch reads DRYVAICHPLHYTVIMREE. Residues 140–158 traverse the membrane as a helical segment; that stretch reads LCVFLVAVSWILSCASSLS. Residues 159 to 196 lie on the Extracellular side of the membrane; that stretch reads HTLLLTRLSFCAANTIPHVFCDLAALLKLSCSDIFLNE. A helical membrane pass occupies residues 197-219; that stretch reads LVMFTVGVVVITLPFMCILVSYG. Residues 220–236 lie on the Cytoplasmic side of the membrane; that stretch reads YIGATILRVPSTKGIHK. The chain crosses the membrane as a helical span at residues 237 to 259; that stretch reads ALSTCGSHLSVVSLYYGSIFGQY. Topologically, residues 260–272 are extracellular; it reads LFPTVSSSIDKDV. The helical transmembrane segment at 273–292 threads the bilayer; sequence IVALMYTVVTPMLNPFIYSL. Residues 293-313 lie on the Cytoplasmic side of the membrane; the sequence is RNRDMKEALGKLFSRATFFSW.

The protein belongs to the G-protein coupled receptor 1 family.

It is found in the cell membrane. In terms of biological role, odorant receptor. This is Olfactory receptor 1J2 (OR1J2) from Homo sapiens (Human).